The primary structure comprises 305 residues: Probable 4-deoxy-4-formamido-L-arabinose-phosphoundecaprenol deformylase ArnD (305 aa).

The NodB homology domain occupies 7-262 (TKVGLRIDVD…QAKENNIEFV (256 aa)).

Belongs to the polysaccharide deacetylase family. ArnD deformylase subfamily.

It catalyses the reaction 4-deoxy-4-formamido-alpha-L-arabinopyranosyl di-trans,octa-cis-undecaprenyl phosphate + H2O = 4-amino-4-deoxy-alpha-L-arabinopyranosyl di-trans,octa-cis-undecaprenyl phosphate + formate. Its pathway is glycolipid biosynthesis; 4-amino-4-deoxy-alpha-L-arabinose undecaprenyl phosphate biosynthesis; 4-amino-4-deoxy-alpha-L-arabinose undecaprenyl phosphate from UDP-4-deoxy-4-formamido-beta-L-arabinose and undecaprenyl phosphate: step 2/2. The protein operates within bacterial outer membrane biogenesis; lipopolysaccharide biosynthesis. Its function is as follows. Catalyzes the deformylation of 4-deoxy-4-formamido-L-arabinose-phosphoundecaprenol to 4-amino-4-deoxy-L-arabinose-phosphoundecaprenol. The modified arabinose is attached to lipid A and is required for resistance to polymyxin and cationic antimicrobial peptides. This Shewanella sediminis (strain HAW-EB3) protein is Probable 4-deoxy-4-formamido-L-arabinose-phosphoundecaprenol deformylase ArnD.